The following is a 128-amino-acid chain: SGSCSIQTCWDQLGAFDIIGEALRKRYETAVLVDYINGNLFPSEVKSKDASEPVDKSDLAFLELSPNYCQLNSTIGAVGTLGRECLRGRGVDEVSEWEARSCKRLCTSCGLGVKRTKVVVSSSCNCKF.

Residue serine 1 is the site of O-palmitoleoyl serine attachment. 2 cysteine pairs are disulfide-bonded: cysteine 69/cysteine 109 and cysteine 85/cysteine 102. Residue asparagine 72 is glycosylated (N-linked (GlcNAc...) asparagine).

This sequence belongs to the Wnt family. Post-translationally, palmitoleoylation is required for efficient binding to frizzled receptors. Depalmitoleoylation leads to Wnt signaling pathway inhibition. Proteolytic processing by tiki1 and tiki2 promotes oxidation and formation of large disulfide-bond oligomers, leading to inactivation of wnt8.

It is found in the secreted. The protein localises to the extracellular space. It localises to the extracellular matrix. Its function is as follows. Ligand for members of the frizzled family of seven transmembrane receptors. Probable developmental protein. May be a signaling molecule which affects the development of discrete regions of tissues. Is likely to signal over only few cell diameters. This Evasterias troschelii (Mottled sea star) protein is Protein Wnt-8 (WNT-8).